Reading from the N-terminus, the 789-residue chain is Probable phosphoketolase (789 aa).

This sequence belongs to the XFP family. It depends on thiamine diphosphate as a cofactor.

The sequence is that of Probable phosphoketolase from Brucella abortus (strain 2308).